A 1427-amino-acid polypeptide reads, in one-letter code: DNA-directed RNA polymerase subunit beta' (1427 aa).

Zn(2+) contacts are provided by C66, C68, C81, and C84. The Mg(2+) site is built by D472, D474, and D476. Positions 815, 889, 896, and 899 each coordinate Zn(2+).

It belongs to the RNA polymerase beta' chain family. The RNAP catalytic core consists of 2 alpha, 1 beta, 1 beta' and 1 omega subunit. When a sigma factor is associated with the core the holoenzyme is formed, which can initiate transcription. The cofactor is Mg(2+). It depends on Zn(2+) as a cofactor.

The enzyme catalyses RNA(n) + a ribonucleoside 5'-triphosphate = RNA(n+1) + diphosphate. DNA-dependent RNA polymerase catalyzes the transcription of DNA into RNA using the four ribonucleoside triphosphates as substrates. The protein is DNA-directed RNA polymerase subunit beta' of Bacteroides fragilis (strain YCH46).